A 266-amino-acid chain; its full sequence is MLIATPYEDLLRLVLDCGVAKMDRTGTGTRSLFGQQLRYDLSVGFPLVTTKKVHFKSVVYELLWFLRGDSNVAWLHEHGVNIWDEWASSTGDLGPIYGVQWRSWPTSSGDYIDQISTALDLLRTEPDSRRIIVSAWNVGEIPQMALPPCHAFFQFYVAQGRLSCQLYQRSADMFLGVPFNIASYALLTHMMAAQSGLLVGEFVWTGGDCHIYDNHVEQVQLQLSREPRAYPELFLAQRDSIFDYVYEDVVVTNYDPHPAIKAPVAI.

Arg24 contacts dUMP. His54 lines the (6R)-5,10-methylene-5,6,7,8-tetrahydrofolate pocket. 129-130 (RR) is a dUMP binding site. Catalysis depends on Cys149, which acts as the Nucleophile. DUMP-binding positions include 169 to 172 (RSAD), Asn180, and 210 to 212 (HIY). (6R)-5,10-methylene-5,6,7,8-tetrahydrofolate is bound at residue Asp172. (6R)-5,10-methylene-5,6,7,8-tetrahydrofolate is bound at residue Ala265.

The protein belongs to the thymidylate synthase family. Bacterial-type ThyA subfamily. As to quaternary structure, homodimer.

The protein localises to the cytoplasm. The enzyme catalyses dUMP + (6R)-5,10-methylene-5,6,7,8-tetrahydrofolate = 7,8-dihydrofolate + dTMP. Its pathway is pyrimidine metabolism; dTTP biosynthesis. Functionally, catalyzes the reductive methylation of 2'-deoxyuridine-5'-monophosphate (dUMP) to 2'-deoxythymidine-5'-monophosphate (dTMP) while utilizing 5,10-methylenetetrahydrofolate (mTHF) as the methyl donor and reductant in the reaction, yielding dihydrofolate (DHF) as a by-product. This enzymatic reaction provides an intracellular de novo source of dTMP, an essential precursor for DNA biosynthesis. This Mycobacterium leprae (strain TN) protein is Thymidylate synthase.